Reading from the N-terminus, the 730-residue chain is MTVGTLSVVSSTASDTASHVSDTRKRQYQRDEALRKKIISELGKKSGNFESPVRKIRRNGEPGTVDSAALDPALTVHMQSLVTETAQLMAAKRQNCVLVVDDDEQLAGIVTATDIATRCVGAGLNARQTLIADIMSTSPLCITSDTRFDDALLLMIEHKFRHLPVVSDGGPDGSAGDEGDVIGIINMRACLREPLNRIARQQEAAQKLVEALEGAQEEIENKSVSGNTNSSSVSGNHAAEFLEYVESLKKKASGLEIMSLIDSSEEPFLVGTRTTVAEATESMARSGVSAVLVMDNGAVSGVFTAHDVVLRVLAAGLDPYRSSVIRVMTPHPDCALASLRVSTALERMIEGKFSNLPVVDESDAIIGMLSLFHLATAIEQTPEEEEEVFDQAENDAGIEPSNGFEDQQQQLLGNSNEVVENYDVNPPLPLNPLPSNTQQSESTYEYSARQLPKPPVQAWQNENLSSNNKPQEYVGVENDYNFSNNPPTAMSEQSFHPSVSQKPMDTPENGSNSFAASPYLQPYNSASQLAPSYVGSLPQYHGNPSFVEQALQDLVQPTDSASQIFPLNPQSPSQFTIKYRSIAGRVHRLRLDGINSVSDLRTAVEEREKEQLVTLTYIDDEGDVVELVSDSDLREAILLARRRGLPRLEVRGVAAFTNHLESSHPPISTVDSSIGSASVVEKGVANSIVDIHQPTAKADKGNSKKPIYIGIVSSSIVILAVSMWYLRRKR.

Residues 1-27 form a disordered region; that stretch reads MTVGTLSVVSSTASDTASHVSDTRKRQ. A compositionally biased stretch (low complexity) spans 7–20; that stretch reads SVVSSTASDTASHV. CBS domains lie at 69–127, 135–200, 263–319, and 328–385; these read ALDP…LNAR, MSTS…RIAR, SSEE…GLDP, and MTPH…PEEE. Helical transmembrane passes span 290–310 and 358–378; these read AVLV…DVVL and VVDE…ATAI. The segment at 420–517 is disordered; it reads ENYDVNPPLP…ENGSNSFAAS (98 aa). Polar residues-rich tracts occupy residues 458-470 and 480-515; these read AWQN…NNKP and YNFS…NSFA. The PB1 domain maps to 572-649; it reads PSQFTIKYRS…ARRRGLPRLE (78 aa). A helical transmembrane segment spans residues 706–726; it reads PIYIGIVSSSIVILAVSMWYL.

The protein resides in the cytoplasm. It is found in the nucleus membrane. Functionally, has a role in meiosis. The protein is Meiotically up-regulated gene 70 protein (mug70) of Schizosaccharomyces pombe (strain 972 / ATCC 24843) (Fission yeast).